Here is a 370-residue protein sequence, read N- to C-terminus: Ubiquitin carboxyl-terminal hydrolase 12-B (370 aa).

The 331-residue stretch at 39-369 (FGLVNFGNTC…SGYILFYQSR (331 aa)) folds into the USP domain. The active-site Nucleophile is C48. Positions 145 to 168 (KQEKQNGRIPNGNIDNENNNNTPD) are disordered. Positions 155-165 (NGNIDNENNNN) are enriched in low complexity. Residues C186, C189, C233, and C236 each coordinate Zn(2+). H317 acts as the Proton acceptor in catalysis.

Belongs to the peptidase C19 family. USP12/USP46 subfamily. In terms of assembly, interacts with WDR48.

The catalysed reaction is Thiol-dependent hydrolysis of ester, thioester, amide, peptide and isopeptide bonds formed by the C-terminal Gly of ubiquitin (a 76-residue protein attached to proteins as an intracellular targeting signal).. Its function is as follows. Deubiquitinating enzyme. Has almost no deubiquitinating activity by itself and requires the interaction with wdr48 to have a high activity. This Xenopus laevis (African clawed frog) protein is Ubiquitin carboxyl-terminal hydrolase 12-B (usp12-b).